Here is a 187-residue protein sequence, read N- to C-terminus: GTP cyclohydrolase 1 (187 aa).

Cys76, His79, and Cys148 together coordinate Zn(2+).

The protein belongs to the GTP cyclohydrolase I family. Homomer.

It catalyses the reaction GTP + H2O = 7,8-dihydroneopterin 3'-triphosphate + formate + H(+). Its pathway is cofactor biosynthesis; 7,8-dihydroneopterin triphosphate biosynthesis; 7,8-dihydroneopterin triphosphate from GTP: step 1/1. The sequence is that of GTP cyclohydrolase 1 from Desulforamulus reducens (strain ATCC BAA-1160 / DSM 100696 / MI-1) (Desulfotomaculum reducens).